The primary structure comprises 190 residues: Segregation and condensation protein B (190 aa).

The protein belongs to the ScpB family. Homodimer. Homodimerization may be required to stabilize the binding of ScpA to the Smc head domains. Component of a cohesin-like complex composed of ScpA, ScpB and the Smc homodimer, in which ScpA and ScpB bind to the head domain of Smc. The presence of the three proteins is required for the association of the complex with DNA.

It localises to the cytoplasm. Its function is as follows. Participates in chromosomal partition during cell division. May act via the formation of a condensin-like complex containing Smc and ScpA that pull DNA away from mid-cell into both cell halves. The polypeptide is Segregation and condensation protein B (Alkaliphilus metalliredigens (strain QYMF)).